Here is a 133-residue protein sequence, read N- to C-terminus: Small ribosomal subunit protein uS8 (133 aa).

This sequence belongs to the universal ribosomal protein uS8 family. As to quaternary structure, part of the 30S ribosomal subunit. Contacts proteins S5 and S12.

Functionally, one of the primary rRNA binding proteins, it binds directly to 16S rRNA central domain where it helps coordinate assembly of the platform of the 30S subunit. This chain is Small ribosomal subunit protein uS8, found in Microcystis aeruginosa (strain NIES-843 / IAM M-2473).